Reading from the N-terminus, the 765-residue chain is Eukaryotic translation initiation factor 3 subunit B (765 aa).

The tract at residues 1 to 136 is sufficient for interaction with HCR1 and TIF32; it reads MKNFLPRTLK…LFVECGSMND (136 aa). The segment at 28–261 is sufficient for interaction with PIC8; sequence RNTQLKRSKI…GVTAWGGPNF (234 aa). Position 61 is a phosphoserine (S61). Y67 is modified (phosphotyrosine). The RRM domain occupies 77-162; it reads QYIVVNGAPV…HRLFLYTMKD (86 aa). Position 671 is a phosphoserine (S671).

It belongs to the eIF-3 subunit B family. Component of the eukaryotic translation initiation factor 3 (eIF-3) complex.

The protein localises to the cytoplasm. In terms of biological role, RNA-binding component of the eukaryotic translation initiation factor 3 (eIF-3) complex, which is involved in protein synthesis of a specialized repertoire of mRNAs and, together with other initiation factors, stimulates binding of mRNA and methionyl-tRNAi to the 40S ribosome. The eIF-3 complex specifically targets and initiates translation of a subset of mRNAs involved in cell proliferation. In Saccharomyces cerevisiae (strain YJM789) (Baker's yeast), this protein is Eukaryotic translation initiation factor 3 subunit B.